A 397-amino-acid chain; its full sequence is Lysosomal acid lipase/cholesteryl ester hydrolase (397 aa).

The N-terminal stretch at 1–25 is a signal peptide; that stretch reads MQLLGRVICFVVGILLSGGPTGTIS. Positions 26–72 are cleaved as a propeptide — removed in mature form; that stretch reads AVDPEANMNVTEIIMHWGYPEHSVQTGDGYILGVHRIPHGRKNQFDK. N-linked (GlcNAc...) asparagine glycosylation is found at Asn34, Asn99, and Asn159. One can recognise an AB hydrolase-1 domain in the interval 84 to 378; that stretch reads HGFLADSSNW…EWDHLDFIWG (295 aa). The active-site Charge relay system is Ser172. N-linked (GlcNAc...) asparagine glycans are attached at residues Asn271 and Asn319. His372 functions as the Charge relay system in the catalytic mechanism.

Belongs to the AB hydrolase superfamily. Lipase family. In terms of assembly, monomer. In terms of processing, glycosylation is not essential for catalytic activity.

It is found in the lysosome. The catalysed reaction is a sterol ester + H2O = a sterol + a fatty acid + H(+). It carries out the reaction cholesteryl (9Z-octadecenoate) + H2O = cholesterol + (9Z)-octadecenoate + H(+). The enzyme catalyses a triacylglycerol + H2O = a 1,2-diacylglycerol + a fatty acid + H(+). It catalyses the reaction 1,2-di-(9Z-octadecenoyl)-glycerol + (9Z)-octadecenoate + H(+) = 1,2,3-tri-(9Z-octadecenoyl)-glycerol + H2O. The catalysed reaction is a 1,2-diacylglycerol + H2O = a 1-acylglycerol + a fatty acid + H(+). It carries out the reaction 1,2-di-(9Z-octadecenoyl)-glycerol + H2O = 1-(9Z-octadecenoyl)-glycerol + (9Z)-octadecenoate + H(+). The enzyme catalyses a 1,3-diacylglycerol + H2O = a 1-acylglycerol + a fatty acid + H(+). It catalyses the reaction 1,3-di-(9Z-octadecenoyl)-glycerol + H2O = 1-(9Z-octadecenoyl)-glycerol + (9Z)-octadecenoate + H(+). Functionally, catalyzes the deacylation of cholesteryl ester core lipids of endocytosed low density lipoproteins to generate free fatty acids and cholesterol. Hydrolyzes triglycerides (1,2,3-triacylglycerol) and diglycerides (such as 1,2-diacylglycerol and 1,3-diacylglycerol) with preference for the acyl moieties at the sn-1 or sn-3 positions. In Rattus norvegicus (Rat), this protein is Lysosomal acid lipase/cholesteryl ester hydrolase (Lipa).